Reading from the N-terminus, the 237-residue chain is Probable transcriptional regulatory protein PSHAa1370 (237 aa).

This sequence belongs to the TACO1 family.

The protein resides in the cytoplasm. The chain is Probable transcriptional regulatory protein PSHAa1370 from Pseudoalteromonas translucida (strain TAC 125).